The chain runs to 634 residues: Growth hormone receptor (634 aa).

The signal sequence occupies residues 1 to 18 (MDLWQLLLTLAVAGSSDA). Over 19–260 (FSGSEATPAF…NPSACEEDFQ (242 aa)) the chain is Extracellular. N-linked (GlcNAc...) asparagine glycosylation occurs at Asn-46. Cys-56 and Cys-66 form a disulfide bridge. Residue Asn-73 is glycosylated (N-linked (GlcNAc...) asparagine). A disulfide bridge links Cys-97 with Cys-108. Residue Asn-111 is glycosylated (N-linked (GlcNAc...) asparagine). Cys-122 and Cys-136 are joined by a disulfide. Residues 147 to 250 (PPVGLNWTLL…EVLLITFPQM (104 aa)) form the Fibronectin type-III domain. N-linked (GlcNAc...) asparagine glycosylation is found at Asn-152, Asn-157, and Asn-196. Residues 236–240 (YGKFS) carry the WSXWS motif motif. Residues 261 to 284 (FPWFLIIIFGILGLAVTLYLLIFS) traverse the membrane as a helical segment. Topologically, residues 285–634 (KQQRIKMLIL…STDQLNKIMP (350 aa)) are cytoplasmic. The required for JAK2 binding stretch occupies residues 290 to 375 (KMLILPPVPV…HEKSLNIFGA (86 aa)). The Box 1 motif signature appears at 293-301 (ILPPVPVPK). Residues 336–345 (DSWVEFIELD) carry the UbE motif motif. Ser-337 is subject to Phosphoserine.

Belongs to the type I cytokine receptor family. Type 1 subfamily. On growth hormone (GH) binding, forms homodimers and binds JAK2 via a box 1-containing domain. Post-translationally, the soluble form (GHBP) is produced by phorbol ester-promoted proteolytic cleavage at the cell surface (shedding) by ADAM17/TACE. Shedding is inhibited by growth hormone (GH) binding to the receptor probably due to a conformational change in GHR rendering the receptor inaccessible to ADAM17. In terms of processing, on GH binding, phosphorylated on tyrosine residues in the cytoplasmic domain by JAK2. Ubiquitinated by the ECS(SOCS2) complex following ligand-binding and phosphorylation by JAK2, leading to its degradation by the proteasome. Regulation by the ECS(SOCS2) complex acts as a negative feedback loop of growth hormone receptor signaling. Ubiquitination is not sufficient for GHR internalization.

The protein localises to the cell membrane. The protein resides in the secreted. Receptor for pituitary gland growth hormone (GH1) involved in regulating postnatal body growth. On ligand binding, couples to the JAK2/STAT5 pathway. Its function is as follows. The soluble form (GHBP) acts as a reservoir of growth hormone in plasma and may be a modulator/inhibitor of GH signaling. In Bos taurus (Bovine), this protein is Growth hormone receptor (GHR).